The primary structure comprises 137 residues: Large ribosomal subunit protein uL16 (137 aa).

Belongs to the universal ribosomal protein uL16 family. Part of the 50S ribosomal subunit.

Its function is as follows. Binds 23S rRNA and is also seen to make contacts with the A and possibly P site tRNAs. The polypeptide is Large ribosomal subunit protein uL16 (Azorhizobium caulinodans (strain ATCC 43989 / DSM 5975 / JCM 20966 / LMG 6465 / NBRC 14845 / NCIMB 13405 / ORS 571)).